Reading from the N-terminus, the 740-residue chain is Polyribonucleotide nucleotidyltransferase (740 aa).

Positions 492 and 498 each coordinate Mg(2+). The KH domain maps to 559–618 (PMVQTLEIQKEKIRDVIGLGGKVIKELCKTFDVEIDISENGEVKVWGNVGENVKKAVQSI). The S1 motif domain maps to 628–696 (GDIFDGEVVK…HKNRVKLTLR (69 aa)).

The protein belongs to the polyribonucleotide nucleotidyltransferase family. It depends on Mg(2+) as a cofactor.

The protein localises to the cytoplasm. The enzyme catalyses RNA(n+1) + phosphate = RNA(n) + a ribonucleoside 5'-diphosphate. Functionally, involved in mRNA degradation. Catalyzes the phosphorolysis of single-stranded polyribonucleotides processively in the 3'- to 5'-direction. The sequence is that of Polyribonucleotide nucleotidyltransferase from Orientia tsutsugamushi (strain Boryong) (Rickettsia tsutsugamushi).